A 272-amino-acid polypeptide reads, in one-letter code: 2,3,4,5-tetrahydropyridine-2,6-dicarboxylate N-succinyltransferase (272 aa).

Substrate-binding residues include Arg-104 and Asp-141.

It belongs to the transferase hexapeptide repeat family. Homotrimer.

The protein resides in the cytoplasm. It carries out the reaction (S)-2,3,4,5-tetrahydrodipicolinate + succinyl-CoA + H2O = (S)-2-succinylamino-6-oxoheptanedioate + CoA. It participates in amino-acid biosynthesis; L-lysine biosynthesis via DAP pathway; LL-2,6-diaminopimelate from (S)-tetrahydrodipicolinate (succinylase route): step 1/3. The protein is 2,3,4,5-tetrahydropyridine-2,6-dicarboxylate N-succinyltransferase of Alkalilimnicola ehrlichii (strain ATCC BAA-1101 / DSM 17681 / MLHE-1).